The primary structure comprises 334 residues: Holliday junction branch migration complex subunit RuvB (334 aa).

The large ATPase domain (RuvB-L) stretch occupies residues 1–181; it reads MSEFLTPERT…GIILELDFYT (181 aa). The ADP site is built by leucine 19 and arginine 20. Residues glutamate 26, phenylalanine 27, and isoleucine 28 each contribute to the ATP site. Residues phenylalanine 27, isoleucine 28, glycine 61, leucine 62, glycine 63, lysine 64, threonine 65, and threonine 66 each coordinate ADP. Residues leucine 62 and glycine 63 each contribute to the ATP site. Residues 127–129 and arginine 170 each bind ATP; that span reads EDF. Positions 180, 216, and 217 each coordinate ADP. Positions 182–255 are small ATPAse domain (RuvB-S); it reads VKELKEIIKR…TMEVLNIDDE (74 aa). ATP is bound at residue proline 216. A head domain (RuvB-H) region spans residues 256 to 334; sequence GLDEFDRKIL…KYEVPENRLF (79 aa). Arginine 309 and arginine 314 together coordinate DNA.

The protein belongs to the RuvB family. In terms of assembly, homohexamer. Forms an RuvA(8)-RuvB(12)-Holliday junction (HJ) complex. HJ DNA is sandwiched between 2 RuvA tetramers; dsDNA enters through RuvA and exits via RuvB. An RuvB hexamer assembles on each DNA strand where it exits the tetramer. Each RuvB hexamer is contacted by two RuvA subunits (via domain III) on 2 adjacent RuvB subunits; this complex drives branch migration. In the full resolvosome a probable DNA-RuvA(4)-RuvB(12)-RuvC(2) complex forms which resolves the HJ.

Its subcellular location is the cytoplasm. It catalyses the reaction ATP + H2O = ADP + phosphate + H(+). In terms of biological role, the RuvA-RuvB-RuvC complex processes Holliday junction (HJ) DNA during genetic recombination and DNA repair, while the RuvA-RuvB complex plays an important role in the rescue of blocked DNA replication forks via replication fork reversal (RFR). RuvA specifically binds to HJ cruciform DNA, conferring on it an open structure. The RuvB hexamer acts as an ATP-dependent pump, pulling dsDNA into and through the RuvAB complex. RuvB forms 2 homohexamers on either side of HJ DNA bound by 1 or 2 RuvA tetramers; 4 subunits per hexamer contact DNA at a time. Coordinated motions by a converter formed by DNA-disengaged RuvB subunits stimulates ATP hydrolysis and nucleotide exchange. Immobilization of the converter enables RuvB to convert the ATP-contained energy into a lever motion, pulling 2 nucleotides of DNA out of the RuvA tetramer per ATP hydrolyzed, thus driving DNA branch migration. The RuvB motors rotate together with the DNA substrate, which together with the progressing nucleotide cycle form the mechanistic basis for DNA recombination by continuous HJ branch migration. Branch migration allows RuvC to scan DNA until it finds its consensus sequence, where it cleaves and resolves cruciform DNA. Promotes Holliday junction (HJ) branch migration in conjunction with RuvA. Subunits can be free, ADP- or ATP-bound; nucleotide binding changes during the reaction cycle. Has a DNA-dependent ATPase activity; dsDNA and supercoiled DNA but not ssDNA stimulate activity. The polypeptide is Holliday junction branch migration complex subunit RuvB (Thermotoga maritima (strain ATCC 43589 / DSM 3109 / JCM 10099 / NBRC 100826 / MSB8)).